The following is a 362-amino-acid chain: Heat-inducible transcription repressor HrcA (362 aa).

It belongs to the HrcA family.

Its function is as follows. Negative regulator of class I heat shock genes (grpE-dnaK-dnaJ and groELS operons). Prevents heat-shock induction of these operons. The chain is Heat-inducible transcription repressor HrcA from Nitrobacter winogradskyi (strain ATCC 25391 / DSM 10237 / CIP 104748 / NCIMB 11846 / Nb-255).